The following is a 601-amino-acid chain: Probable inactive receptor kinase At1g27190 (601 aa).

Residues methionine 1–alanine 24 form the signal peptide. Asparagine 52 carries N-linked (GlcNAc...) asparagine glycosylation. LRR repeat units lie at residues arginine 73–cysteine 95, serine 97–tryptophan 119, tyrosine 122–cysteine 144, phenylalanine 146–aspartate 169, and arginine 170–phenylalanine 192. A helical membrane pass occupies residues isoleucine 221–phenylalanine 241. A Phosphothreonine modification is found at threonine 298. The Protein kinase domain occupies phenylalanine 301–serine 586. ATP-binding positions include aspartate 307 to serine 315 and lysine 329. A Phosphoserine modification is found at serine 383. A Phosphothreonine modification is found at threonine 399. A Phosphotyrosine modification is found at tyrosine 476. Serine 478 carries the phosphoserine modification. Threonine 479 is modified (phosphothreonine). Phosphoserine is present on residues serine 483 and serine 586.

It belongs to the protein kinase superfamily. Ser/Thr protein kinase family.

It localises to the membrane. The chain is Probable inactive receptor kinase At1g27190 from Arabidopsis thaliana (Mouse-ear cress).